The primary structure comprises 187 residues: Phosphoheptose isomerase (187 aa).

Residues 34–187 (CIEALKNQKK…ILCSLIDESF (154 aa)) form the SIS domain. A substrate-binding site is contributed by 49–51 (NGG). Positions 58 and 62 each coordinate Zn(2+). Substrate is bound by residues E62, 91-92 (ND), 117-119 (STS), S122, and Q169. Positions 169 and 177 each coordinate Zn(2+).

The protein belongs to the SIS family. GmhA subfamily. In terms of assembly, homotetramer. Requires Zn(2+) as cofactor.

The protein resides in the cytoplasm. The enzyme catalyses 2 D-sedoheptulose 7-phosphate = D-glycero-alpha-D-manno-heptose 7-phosphate + D-glycero-beta-D-manno-heptose 7-phosphate. It participates in carbohydrate biosynthesis; D-glycero-D-manno-heptose 7-phosphate biosynthesis; D-glycero-alpha-D-manno-heptose 7-phosphate and D-glycero-beta-D-manno-heptose 7-phosphate from sedoheptulose 7-phosphate: step 1/1. In terms of biological role, catalyzes the isomerization of sedoheptulose 7-phosphate in D-glycero-D-manno-heptose 7-phosphate. This Nitratiruptor sp. (strain SB155-2) protein is Phosphoheptose isomerase.